The following is a 111-amino-acid chain: uncharacterized protein (111 aa).

A coiled-coil region spans residues 3-29 (RKITSYKTSLQGLREENEDVELMNLNL). One can recognise a PPM-type phosphatase domain in the interval 6–111 (TSYKTSLQGL…TWWMYCSSYY (106 aa)).

This is an uncharacterized protein from Acanthamoeba polyphaga mimivirus (APMV).